Consider the following 128-residue polypeptide: UPF0102 protein KPN78578_35270 (128 aa).

The tract at residues 1-20 (MAQVPAGKNRSGQLSKQTGD) is disordered.

The protein belongs to the UPF0102 family.

This Klebsiella pneumoniae subsp. pneumoniae (strain ATCC 700721 / MGH 78578) protein is UPF0102 protein KPN78578_35270.